A 196-amino-acid polypeptide reads, in one-letter code: GTP cyclohydrolase 1 (196 aa).

The Zn(2+) site is built by Cys-86, His-89, and Cys-158.

The protein belongs to the GTP cyclohydrolase I family. In terms of assembly, homomer.

It catalyses the reaction GTP + H2O = 7,8-dihydroneopterin 3'-triphosphate + formate + H(+). The protein operates within cofactor biosynthesis; 7,8-dihydroneopterin triphosphate biosynthesis; 7,8-dihydroneopterin triphosphate from GTP: step 1/1. The sequence is that of GTP cyclohydrolase 1 from Clostridium botulinum (strain Loch Maree / Type A3).